We begin with the raw amino-acid sequence, 336 residues long: 4-hydroxy-2-oxovalerate aldolase (336 aa).

The Pyruvate carboxyltransferase domain occupies 4 to 254 (PRLTDTTLRD…NPGLDVLALM (251 aa)). 12–13 (RD) provides a ligand contact to substrate. Asp-13 contacts Mn(2+). His-16 serves as the catalytic Proton acceptor. Positions 166 and 193 each coordinate substrate. 2 residues coordinate Mn(2+): His-193 and His-195. Tyr-284 serves as a coordination point for substrate.

This sequence belongs to the 4-hydroxy-2-oxovalerate aldolase family.

The catalysed reaction is (S)-4-hydroxy-2-oxopentanoate = acetaldehyde + pyruvate. This chain is 4-hydroxy-2-oxovalerate aldolase, found in Roseiflexus castenholzii (strain DSM 13941 / HLO8).